The chain runs to 95 residues: Small ribosomal subunit protein bS6 (95 aa).

The protein belongs to the bacterial ribosomal protein bS6 family.

In terms of biological role, binds together with bS18 to 16S ribosomal RNA. The polypeptide is Small ribosomal subunit protein bS6 (Bacillus pumilus (strain SAFR-032)).